The following is a 217-amino-acid chain: ATP phosphoribosyltransferase (217 aa).

This sequence belongs to the ATP phosphoribosyltransferase family. Short subfamily. As to quaternary structure, heteromultimer composed of HisG and HisZ subunits.

The protein resides in the cytoplasm. It catalyses the reaction 1-(5-phospho-beta-D-ribosyl)-ATP + diphosphate = 5-phospho-alpha-D-ribose 1-diphosphate + ATP. It participates in amino-acid biosynthesis; L-histidine biosynthesis; L-histidine from 5-phospho-alpha-D-ribose 1-diphosphate: step 1/9. Its function is as follows. Catalyzes the condensation of ATP and 5-phosphoribose 1-diphosphate to form N'-(5'-phosphoribosyl)-ATP (PR-ATP). Has a crucial role in the pathway because the rate of histidine biosynthesis seems to be controlled primarily by regulation of HisG enzymatic activity. The chain is ATP phosphoribosyltransferase from Prochlorococcus marinus (strain MIT 9313).